A 150-amino-acid polypeptide reads, in one-letter code: UPF0756 membrane protein PC1_1142 (150 aa).

The next 4 helical transmembrane spans lie at 1-21 (MAYL…GIIS), 51-71 (YGLS…IASG), 82-102 (FLHW…WLGG), and 127-147 (ALFR…SLLI).

Belongs to the UPF0756 family.

Its subcellular location is the cell membrane. This chain is UPF0756 membrane protein PC1_1142, found in Pectobacterium carotovorum subsp. carotovorum (strain PC1).